The chain runs to 196 residues: Interferon lambda-3 (196 aa).

The signal sequence occupies residues Met1 to Ala21. Disulfide bonds link Cys37–Cys136, Cys71–Cys169, and Cys188–Cys195.

This sequence belongs to the lambda interferon family.

Its subcellular location is the secreted. In terms of biological role, cytokine with antiviral, antitumour and immunomodulatory activities. Plays a critical role in the antiviral host defense, predominantly in the epithelial tissues. Acts as a ligand for the heterodimeric class II cytokine receptor composed of IL10RB and IFNLR1, and receptor engagement leads to the activation of the JAK/STAT signaling pathway resulting in the expression of IFN-stimulated genes (ISG), which mediate the antiviral state. Has a restricted receptor distribution and therefore restricted targets: is primarily active in epithelial cells and this cell type-selective action is because of the epithelial cell-specific expression of its receptor IFNLR1. Seems not to be essential for early virus-activated host defense in vaginal infection, but plays an important role in Toll-like receptor (TLR)-induced antiviral defense. Plays a significant role in the antiviral immune defense in the intestinal epithelium. Exerts an immunomodulatory effect by up-regulating MHC class I antigen expression. The chain is Interferon lambda-3 (IFNL3) from Homo sapiens (Human).